Consider the following 356-residue polypeptide: Tyrosinase P (356 aa).

Positions 1–19 are cleaved as a signal peptide; that stretch reads MGFYRNLVLVAASCTQALG. The N-linked (GlcNAc...) asparagine glycan is linked to asparagine 81. Cu cation is bound by residues histidine 87 and histidine 96. Residues asparagine 148 and asparagine 193 are each glycosylated (N-linked (GlcNAc...) asparagine). Histidine 203 provides a ligand contact to Cu cation. The N-linked (GlcNAc...) asparagine glycan is linked to asparagine 226. 2 residues coordinate Cu cation: histidine 263 and histidine 286. An N-linked (GlcNAc...) asparagine glycan is attached at asparagine 309.

Belongs to the tyrosinase family. Requires Cu(2+) as cofactor. Post-translationally, glycosylated.

It localises to the endoplasmic reticulum lumen. The protein localises to the golgi apparatus lumen. It carries out the reaction aspulvinone E + O2 = (5Z)-3-(3,4-dihydroxyphenyl)-5-[(3,4-dihydroxyphenyl)methylidene]-5-oxo-2,5-dihydrofuran-3-olate. The enzyme catalyses aspulvinone E + O2 = (2Z)-2-[(3,4-dioxocyclohexa-1,5-dien-1-yl)methylidene]-4-(4-hydroxyphenyl)-5-oxo-2,5-dihydrofuran-3-olate + H2O. Its activity is regulated as follows. Activity is inhibited by the presence of dithiothreitol (DTT). In terms of biological role, tyrosinase; part of the gene cluster that mediates the biosynthesis of Asp-melanin, a pigment that confers resistance against UV light and hampers phagocytosis by soil amoeba. The nonribosomal peptide synthase melA converts 4-hydroxyphenylpyruvate (4-HPPA) to aspulvinone E. The tyrosinase tyrP then performs hydroxylations of both aromatic moieties of aspulvinone E. The product of tyrP is highly unstable, and, due to the high reactivity of methides and ortho-diquinones, the polymeric Asp-melanin forms spontaneously. The polypeptide is Tyrosinase P (tyrP) (Aspergillus terreus).